The following is a 139-amino-acid chain: Small ribosomal subunit protein uS12m (139 aa).

Residues 1–29 (MSWSGLLRGLSMSLNYGLALAPRPWGTRP) constitute a mitochondrion transit peptide. The interval 37–57 (HRRGPPKFPPSKPGPTEGRPQ) is disordered.

It belongs to the universal ribosomal protein uS12 family. Component of the mitochondrial ribosome small subunit (28S) which comprises a 12S rRNA and about 30 distinct proteins.

The protein resides in the mitochondrion. The polypeptide is Small ribosomal subunit protein uS12m (MRPS12) (Bos taurus (Bovine)).